A 408-amino-acid chain; its full sequence is MIDTIAIIGAGLAGSTAARALRAQGYEGRIHLLGDESHQAYDRTTLSKTVLAGEQPEPPAILDSAWYASAHVDVQLGRRVSCLDLANRQIQFESGAPLAYDRLLLATGARARRMAIRGGDLAGIHTLRDLADSQALRQALQPGQSLVIVGGGLIGCEVATTARKLSVHVTILEAGDELLVRVLGHRTGAWCRAELERMGVRVERNAQAARFEGQGQVRAVICADGRRVPADVVLVSIGAEPADELARAAGIACARGVLVDATGATSCPEVFAAGDVAAWPLRQGGQRSLETYLNSQMEAEIAASAMLSQPVPAPQVPTSWTEIAGHRIQMIGDAEGPGEIVVRGDAQSGQPIVLLRLLDGCVEAATAINATREFSVATRLVGTRVSVSAEQLQDVGSNLRDLLKAKPN.

4–35 (TIAIIGAGLAGSTAARALRAQGYEGRIHLLGD) is an FAD binding site. 145-173 (SLVIVGGGLIGCEVATTARKLSVHVTILE) contributes to the NAD(+) binding site.

This sequence belongs to the bacterial ring-hydroxylating dioxygenase ferredoxin reductase family. As to quaternary structure, this dioxygenase system consists of four proteins: the two subunits of the hydroxylase component (BphA and BphE), a ferredoxin (BphF) and a ferredoxin reductase (BphG). The cofactor is FAD.

It carries out the reaction 2 reduced [2Fe-2S]-[ferredoxin] + NAD(+) + H(+) = 2 oxidized [2Fe-2S]-[ferredoxin] + NADH. It participates in xenobiotic degradation; biphenyl degradation. Functionally, part of the electron transfer component of biphenyl dioxygenase, transfers electrons from ferredoxin (BphF) to NADH. The polypeptide is Biphenyl dioxygenase system ferredoxin--NAD(+) reductase component (bphG) (Paraburkholderia xenovorans (strain LB400)).